The following is a 385-amino-acid chain: Signal transduction histidine-protein kinase/phosphatase DegS (385 aa).

The stretch at 31-141 (QIGEQSRQQY…IERSESLVSQ (111 aa)) forms a coiled coil. At Ser-76 the chain carries Phosphoserine. The Histidine kinase domain maps to 183–385 (RVSREIHDGP…FIMIKVPLSL (203 aa)). Residue His-189 is modified to Phosphohistidine; by autocatalysis.

Post-translationally, autophosphorylated. Phosphorylated in vitro at Ser-76 by the serine/threonine-protein kinase YbdM, which stimulates the phosphate transfer to DegU.

It localises to the cytoplasm. It carries out the reaction ATP + protein L-histidine = ADP + protein N-phospho-L-histidine.. Regulated via serine phosphorylation of its input domain. Phosphotransfer from DegS to DegU is stimulated by phosphorylation on Ser-76 and by DegQ. Its function is as follows. Member of the two-component regulatory system DegS/DegU, which plays an important role in the transition growth phase. Involved in the control of expression of different cellular functions, including production of degradative enzymes such as the neutral and alkaline proteases, flagellum formation and biofilm formation. Acts both as a protein kinase that undergoes autophosphorylation and subsequently transfers the phosphate to DegU, and as a protein phosphatase that dephosphorylates phospho-DegU. This chain is Signal transduction histidine-protein kinase/phosphatase DegS (degS), found in Bacillus subtilis (strain 168).